The following is a 152-amino-acid chain: MSQLCPCGSAVEYSLCCHPYVFGEKVAPDPEHLMRSRYCAFVMQDADYLIKTWHPSCGAAALRAELIAGFAHTEWLGLTVFEHCWQDGGNIGFVSFVARFTEGGKTGAIIERSRFLKENGQWYYIDGTRPQFGRNDPCPCGSGKKFKKCCGQ.

Belongs to the UPF0225 family.

This chain is UPF0225 protein YchJ, found in Escherichia coli O81 (strain ED1a).